Reading from the N-terminus, the 1079-residue chain is Lon protease homolog, mitochondrial (1079 aa).

The transit peptide at Met1 to Asn60 directs the protein to the mitochondrion. Over residues Lys61–Val116 the composition is skewed to basic and acidic residues. Disordered regions lie at residues Lys61–Val158 and Leu262–Pro285. Positions Ser117–Thr131 are enriched in polar residues. A compositionally biased stretch (low complexity) spans Gly132 to Gly143. The Lon N-terminal domain maps to Leu165 to Leu391. The segment covering Leu262–Ala281 has biased composition (basic and acidic residues). Residue Gly543–Thr550 participates in ATP binding. A compositionally biased stretch (basic and acidic residues) spans Ala756–Gly765. Residues Ala756–Lys832 are disordered. The segment covering Ala768–Ser779 has biased composition (low complexity). Polar residues predominate over residues Thr780 to Lys802. Over residues Val803–Lys818 the composition is skewed to basic and acidic residues. The 189-residue stretch at Phe865–Asn1053 folds into the Lon proteolytic domain. Catalysis depends on residues Ser959 and Lys1002.

This sequence belongs to the peptidase S16 family. As to quaternary structure, homohexamer or homoheptamer. Organized in a ring with a central cavity.

It is found in the mitochondrion matrix. The catalysed reaction is Hydrolysis of proteins in presence of ATP.. Its function is as follows. ATP-dependent serine protease that mediates the selective degradation of misfolded, unassembled or oxidatively damaged polypeptides as well as certain short-lived regulatory proteins in the mitochondrial matrix. May also have a chaperone function in the assembly of inner membrane protein complexes. Participates in the regulation of mitochondrial gene expression and in the maintenance of the integrity of the mitochondrial genome. Binds to mitochondrial DNA in a site-specific manner. This chain is Lon protease homolog, mitochondrial, found in Debaryomyces hansenii (strain ATCC 36239 / CBS 767 / BCRC 21394 / JCM 1990 / NBRC 0083 / IGC 2968) (Yeast).